Reading from the N-terminus, the 420-residue chain is Gamma-glutamyl phosphate reductase (420 aa).

This sequence belongs to the gamma-glutamyl phosphate reductase family.

It localises to the cytoplasm. The enzyme catalyses L-glutamate 5-semialdehyde + phosphate + NADP(+) = L-glutamyl 5-phosphate + NADPH + H(+). Its pathway is amino-acid biosynthesis; L-proline biosynthesis; L-glutamate 5-semialdehyde from L-glutamate: step 2/2. Functionally, catalyzes the NADPH-dependent reduction of L-glutamate 5-phosphate into L-glutamate 5-semialdehyde and phosphate. The product spontaneously undergoes cyclization to form 1-pyrroline-5-carboxylate. This chain is Gamma-glutamyl phosphate reductase, found in Oenococcus oeni (strain ATCC BAA-331 / PSU-1).